A 465-amino-acid polypeptide reads, in one-letter code: Ribosomal oxygenase 2 (465 aa).

Residues 139–271 enclose the JmjC domain; the sequence is QPQRYKDELW…NSWGDCLLDS (133 aa). Fe cation-binding residues include H179, D181, and H240. S309 carries the phosphoserine modification.

The protein belongs to the ROX family. MINA53 subfamily. It depends on Fe(2+) as a cofactor. Predominantly expressed in testis. Expressed at high levels in spleen, thymus, and colon, but barely detectable in brain, skeletal muscle, and seminal vesicle (at protein level).

The protein localises to the nucleus. The protein resides in the nucleolus. The enzyme catalyses L-histidyl-[ribosomal protein uL15] + 2-oxoglutarate + O2 = (3S)-3-hydroxy-L-histidyl-[ribosomal protein uL15] + succinate + CO2. It catalyses the reaction L-histidyl-[protein] + 2-oxoglutarate + O2 = (3S)-3-hydroxy-L-histidyl-[protein] + succinate + CO2. Functionally, oxygenase that can act as both a histone lysine demethylase and a ribosomal histidine hydroxylase. Is involved in the demethylation of trimethylated 'Lys-9' on histone H3 (H3K9me3), leading to an increase in ribosomal RNA expression. Also catalyzes the hydroxylation of 60S ribosomal protein L27a on 'His-39'. May play an important role in cell growth and survival. May be involved in ribosome biogenesis, most likely during the assembly process of pre-ribosomal particles. This chain is Ribosomal oxygenase 2, found in Mus musculus (Mouse).